The chain runs to 49 residues: uncharacterized protein (49 aa).

Residues 16–36 (WTCHTGFYLMILLVLFFMYGF) traverse the membrane as a helical segment.

Its subcellular location is the cell membrane. This is an uncharacterized protein from Bacillus subtilis (strain 168).